The sequence spans 431 residues: Ammonium transporter 3 (431 aa).

Over 1 to 27 the chain is Extracellular; the sequence is MEQFSTSSSESSDSSSEYSLEFYMDTS. The helical transmembrane segment at 28–48 threads the bilayer; that stretch reads WVLDAANLVFFMQAGFGMLEA. Residues 49–63 are Cytoplasmic-facing; the sequence is GMVRAKNTKSILLKN. Residues 64-84 traverse the membrane as a helical segment; the sequence is LINTAICAISYYCVGHSFAYG. Topologically, residues 85-102 are extracellular; that stretch reads KVNPNSFVGFGNFFLMDY. The helical transmembrane segment at 103 to 125 threads the bilayer; sequence THYAYWMIQWAYAATATTIATGA. Residues 126-134 lie on the Cytoplasmic side of the membrane; the sequence is MAERLQLHC. A helical transmembrane segment spans residues 135–155; sequence YILFTLVQTILIYPFVAHWIW. The Extracellular portion of the chain corresponds to 156 to 160; sequence SQNGW. The chain crosses the membrane as a helical span at residues 161–181; that stretch reads LFDLGIVDFAGGAVIHIVAGI. Topologically, residues 182–211 are cytoplasmic; that stretch reads TGACGSFLLGPRIGRFNQESGKPKNLPGHS. Residues 212 to 232 form a helical membrane-spanning segment; that stretch reads VVLMSLGAMILWYSWYGYTAG. At 233–249 the chain is on the extracellular side; sequence ASLGMTRSRVLPASRVS. Residues 250-270 traverse the membrane as a helical segment; that stretch reads VVVTLSGATGLITVLGIGKIF. Residues 271-300 lie on the Cytoplasmic side of the membrane; sequence NGHYDLVKGINGLIAGLVSSTSSCAYIEPW. Residues 301–321 form a helical membrane-spanning segment; the sequence is AAIIIGFIGGIVYWFSSWALL. Over 322-333 the chain is Extracellular; that stretch reads NWLRLDDPVDST. Residues 334–354 form a helical membrane-spanning segment; that stretch reads AIHLFGGCWSLISVAFFATHG. Residues 355–357 are Cytoplasmic-facing; it reads RVR. The chain crosses the membrane as a helical span at residues 358–378; the sequence is NPDIILPGGIFYGGGISLLWV. A topological domain (extracellular) is located at residue Q379. The helical transmembrane segment at 380-400 threads the bilayer; it reads LVGMVLAILWAGFLSGIFFFT. Topologically, residues 401–431 are cytoplasmic; the sequence is MDYFGKLRVDVDTELAGLDNSNHGGSAYIFD.

Belongs to the ammonia transporter channel (TC 1.A.11.2) family.

It localises to the cell membrane. It is found in the endosome membrane. Its subcellular location is the cytoplasmic vesicle. The protein resides in the phagosome membrane. Its function is as follows. Ammonium transporter that mediates the import of ammonium in prespore cells. Controls ammonium homeostasis during growth and development. Ammonium has been shown to function as a morphogen at multiple steps during the development. May function as an ammonia sensor that relays information concerning ammonia concentrations to the signaling pathway involved in the slug versus culmination choice and regulates prestalk gene expression. This is Ammonium transporter 3 (amtC) from Dictyostelium discoideum (Social amoeba).